The sequence spans 375 residues: Queuine tRNA-ribosyltransferase (375 aa).

Residue Asp89 is the Proton acceptor of the active site. Substrate-binding positions include 89–93 (DSGGF), Asp143, Gln187, and Gly214. An RNA binding region spans residues 245–251 (GVGKPED). Asp264 acts as the Nucleophile in catalysis. The segment at 269-273 (TRNAR) is RNA binding; important for wobble base 34 recognition. Positions 302, 304, 307, and 333 each coordinate Zn(2+).

The protein belongs to the queuine tRNA-ribosyltransferase family. Homodimer. Within each dimer, one monomer is responsible for RNA recognition and catalysis, while the other monomer binds to the replacement base PreQ1. It depends on Zn(2+) as a cofactor.

The enzyme catalyses 7-aminomethyl-7-carbaguanine + guanosine(34) in tRNA = 7-aminomethyl-7-carbaguanosine(34) in tRNA + guanine. It participates in tRNA modification; tRNA-queuosine biosynthesis. Functionally, catalyzes the base-exchange of a guanine (G) residue with the queuine precursor 7-aminomethyl-7-deazaguanine (PreQ1) at position 34 (anticodon wobble position) in tRNAs with GU(N) anticodons (tRNA-Asp, -Asn, -His and -Tyr). Catalysis occurs through a double-displacement mechanism. The nucleophile active site attacks the C1' of nucleotide 34 to detach the guanine base from the RNA, forming a covalent enzyme-RNA intermediate. The proton acceptor active site deprotonates the incoming PreQ1, allowing a nucleophilic attack on the C1' of the ribose to form the product. After dissociation, two additional enzymatic reactions on the tRNA convert PreQ1 to queuine (Q), resulting in the hypermodified nucleoside queuosine (7-(((4,5-cis-dihydroxy-2-cyclopenten-1-yl)amino)methyl)-7-deazaguanosine). This chain is Queuine tRNA-ribosyltransferase, found in Salmonella arizonae (strain ATCC BAA-731 / CDC346-86 / RSK2980).